The chain runs to 142 residues: Large ribosomal subunit protein uL16 (142 aa).

Belongs to the universal ribosomal protein uL16 family. In terms of assembly, part of the 50S ribosomal subunit.

In terms of biological role, binds 23S rRNA and is also seen to make contacts with the A and possibly P site tRNAs. The chain is Large ribosomal subunit protein uL16 from Mycoplasmopsis pulmonis (strain UAB CTIP) (Mycoplasma pulmonis).